Reading from the N-terminus, the 478-residue chain is Alpha-1,3-mannosyl-glycoprotein 4-beta-N-acetylglucosaminyltransferase C (478 aa).

Topologically, residues 1–23 are cytoplasmic; it reads MFKFHQVKHIFEILDKMRCLRKR. A helical; Signal-anchor for type II membrane protein transmembrane segment spans residues 24–44; sequence FTVSFLGVLVIFLLFMNLYIE. The Lumenal segment spans residues 45–478; the sequence is DSYVLEGDKQ…IIRSISIWTS (434 aa). N-linked (GlcNAc...) asparagine glycosylation is found at Asn84, Asn215, and Asn348.

It belongs to the glycosyltransferase 54 family. It depends on a divalent metal cation as a cofactor.

It localises to the golgi apparatus membrane. It catalyses the reaction N(4)-{beta-D-GlcNAc-(1-&gt;2)-alpha-D-Man-(1-&gt;3)-[beta-D-GlcNAc-(1-&gt;2)-alpha-D-Man-(1-&gt;6)]-beta-D-Man-(1-&gt;4)-beta-D-GlcNAc-(1-&gt;4)-beta-D-GlcNAc}-L-asparaginyl-[protein] + UDP-N-acetyl-alpha-D-glucosamine = N(4)-{beta-D-GlcNAc-(1-&gt;2)-[beta-D-GlcNAc-(1-&gt;4)]-alpha-D-Man-(1-&gt;3)-[beta-D-GlcNAc-(1-&gt;2)-alpha-D-Man-(1-&gt;6)]-beta-D-Man-(1-&gt;4)-beta-D-GlcNAc-(1-&gt;4)-beta-D-GlcNAc}-L-asparaginyl-[protein] + UDP + H(+). It functions in the pathway protein modification; protein glycosylation. Functionally, glycosyltransferase that participates in the transfer of N-acetylglucosamine (GlcNAc) to the core mannose residues of N-linked glycans. Catalyzes the formation of the GlcNAcbeta1-4 branch on the GlcNAcbeta1-2Manalpha1-3 arm of the core structure of N-linked glycans. Essential for the production of tri- and tetra-antennary N-linked sugar chains. Does not catalyze the transfer of GlcNAc to the Manalpha1-6 arm to form GlcNAcBeta1-4Manalpha1-6 linkage ('GnT-VI' activity). This chain is Alpha-1,3-mannosyl-glycoprotein 4-beta-N-acetylglucosaminyltransferase C (MGAT4C), found in Sus scrofa (Pig).